A 795-amino-acid polypeptide reads, in one-letter code: Arcadin-4 (795 aa).

Coiled coils occupy residues 205 to 253, 323 to 412, and 450 to 618; these read YSGL…HEQI, YDAL…YTSL, and FGGV…LKKR.

Its subcellular location is the cytoplasm. The protein resides in the cytoskeleton. Functionally, part of an actin-like archaeal cytoskeleton. The polypeptide is Arcadin-4 (Pyrobaculum calidifontis (strain DSM 21063 / JCM 11548 / VA1)).